Consider the following 332-residue polypeptide: GTP 3',8-cyclase (332 aa).

Residues 9-220 form the Radical SAM core domain; sequence GYNRRVDYLR…TQVRERIAER (212 aa). Arg-18 serves as a coordination point for GTP. Positions 25 and 29 each coordinate [4Fe-4S] cluster. Tyr-31 contacts S-adenosyl-L-methionine. Cys-32 contacts [4Fe-4S] cluster. Position 67 (Arg-67) interacts with GTP. Gly-71 is a binding site for S-adenosyl-L-methionine. A GTP-binding site is contributed by Thr-98. Ser-122 contributes to the S-adenosyl-L-methionine binding site. Lys-159 is a binding site for GTP. Position 193 (Met-193) interacts with S-adenosyl-L-methionine. [4Fe-4S] cluster is bound by residues Cys-258 and Cys-261. 263–265 contributes to the GTP binding site; that stretch reads RVR. Residue Cys-275 coordinates [4Fe-4S] cluster.

It belongs to the radical SAM superfamily. MoaA family. As to quaternary structure, monomer and homodimer. It depends on [4Fe-4S] cluster as a cofactor.

The enzyme catalyses GTP + AH2 + S-adenosyl-L-methionine = (8S)-3',8-cyclo-7,8-dihydroguanosine 5'-triphosphate + 5'-deoxyadenosine + L-methionine + A + H(+). It participates in cofactor biosynthesis; molybdopterin biosynthesis. In terms of biological role, catalyzes the cyclization of GTP to (8S)-3',8-cyclo-7,8-dihydroguanosine 5'-triphosphate. The protein is GTP 3',8-cyclase of Pseudomonas fluorescens (strain Pf0-1).